We begin with the raw amino-acid sequence, 250 residues long: Replicating protein (250 aa).

2 disordered regions span residues Met1–Lys23 and Lys168–Glu250. Basic and acidic residues-rich tracts occupy residues Gly13–Lys23 and Asp178–Ala190. The segment covering Ser218–Pro237 has biased composition (polar residues).

In terms of biological role, required for replication. It likely regulates pTAR copy number. In Rhizobium radiobacter (Agrobacterium tumefaciens), this protein is Replicating protein (repA).